The following is a 221-amino-acid chain: Phosphoribosylformylglycinamidine synthase subunit PurQ (221 aa).

Positions 3 to 221 (AAVLVFPGSN…MFASLMQVMA (219 aa)) constitute a Glutamine amidotransferase type-1 domain. The active-site Nucleophile is Cys87. Residues His195 and Glu197 contribute to the active site.

Part of the FGAM synthase complex composed of 1 PurL, 1 PurQ and 2 PurS subunits.

The protein localises to the cytoplasm. It catalyses the reaction N(2)-formyl-N(1)-(5-phospho-beta-D-ribosyl)glycinamide + L-glutamine + ATP + H2O = 2-formamido-N(1)-(5-O-phospho-beta-D-ribosyl)acetamidine + L-glutamate + ADP + phosphate + H(+). The catalysed reaction is L-glutamine + H2O = L-glutamate + NH4(+). Its pathway is purine metabolism; IMP biosynthesis via de novo pathway; 5-amino-1-(5-phospho-D-ribosyl)imidazole from N(2)-formyl-N(1)-(5-phospho-D-ribosyl)glycinamide: step 1/2. In terms of biological role, part of the phosphoribosylformylglycinamidine synthase complex involved in the purines biosynthetic pathway. Catalyzes the ATP-dependent conversion of formylglycinamide ribonucleotide (FGAR) and glutamine to yield formylglycinamidine ribonucleotide (FGAM) and glutamate. The FGAM synthase complex is composed of three subunits. PurQ produces an ammonia molecule by converting glutamine to glutamate. PurL transfers the ammonia molecule to FGAR to form FGAM in an ATP-dependent manner. PurS interacts with PurQ and PurL and is thought to assist in the transfer of the ammonia molecule from PurQ to PurL. This chain is Phosphoribosylformylglycinamidine synthase subunit PurQ, found in Zymomonas mobilis subsp. mobilis (strain ATCC 31821 / ZM4 / CP4).